The following is a 306-amino-acid chain: Protoheme IX farnesyltransferase (306 aa).

Helical transmembrane passes span Leu-28–Leu-48, Phe-53–Gly-73, Ala-105–Ile-125, Ile-127–Trp-147, Thr-156–Pro-176, Ala-182–Ile-202, Leu-227–Gln-244, Leu-246–Ile-266, and Phe-283–Ile-303.

Belongs to the UbiA prenyltransferase family. Protoheme IX farnesyltransferase subfamily. As to quaternary structure, interacts with CtaA.

The protein localises to the cell membrane. The enzyme catalyses heme b + (2E,6E)-farnesyl diphosphate + H2O = Fe(II)-heme o + diphosphate. It functions in the pathway porphyrin-containing compound metabolism; heme O biosynthesis; heme O from protoheme: step 1/1. Functionally, converts heme B (protoheme IX) to heme O by substitution of the vinyl group on carbon 2 of heme B porphyrin ring with a hydroxyethyl farnesyl side group. The sequence is that of Protoheme IX farnesyltransferase from Macrococcus caseolyticus (strain JCSC5402) (Macrococcoides caseolyticum).